The following is a 259-amino-acid chain: Putative carbamate hydrolase RutD (259 aa).

Belongs to the AB hydrolase superfamily. Hydrolase RutD family.

The enzyme catalyses carbamate + 2 H(+) = NH4(+) + CO2. Functionally, involved in pyrimidine catabolism. May facilitate the hydrolysis of carbamate, a reaction that can also occur spontaneously. This chain is Putative carbamate hydrolase RutD, found in Pseudomonas syringae pv. syringae (strain B728a).